A 124-amino-acid chain; its full sequence is Small ribosomal subunit protein uS12 (124 aa).

The tract at residues 8–30 (IRSARQDTEKQTKSPALKSCPQR) is disordered. D89 bears the 3-methylthioaspartic acid mark. The segment at 103–124 (DTAGVKDRKQSRSKYGAKKPKA) is disordered. The segment covering 113 to 124 (SRSKYGAKKPKA) has biased composition (basic residues).

This sequence belongs to the universal ribosomal protein uS12 family. In terms of assembly, part of the 30S ribosomal subunit. Contacts proteins S8 and S17. May interact with IF1 in the 30S initiation complex.

Its function is as follows. With S4 and S5 plays an important role in translational accuracy. Interacts with and stabilizes bases of the 16S rRNA that are involved in tRNA selection in the A site and with the mRNA backbone. Located at the interface of the 30S and 50S subunits, it traverses the body of the 30S subunit contacting proteins on the other side and probably holding the rRNA structure together. The combined cluster of proteins S8, S12 and S17 appears to hold together the shoulder and platform of the 30S subunit. The chain is Small ribosomal subunit protein uS12 from Trichodesmium erythraeum (strain IMS101).